The primary structure comprises 537 residues: Pentatricopeptide repeat-containing protein At4g32450, mitochondrial (537 aa).

The N-terminal 110 residues, 1-110 (MIYTLTRGSL…EHSEIINQRN (110 aa)), are a transit peptide targeting the mitochondrion. Positions 113-140 (WQSSDGCSSYGTTGNGVPQENNTGGNHF) are enriched in polar residues. The segment at 113–148 (WQSSDGCSSYGTTGNGVPQENNTGGNHFQQDHSGHS) is disordered. PPR repeat units lie at residues 145-179 (SGHSSLDELDSICREGKVKKAVEIIKSWRNEGYVV), 180-210 (DLPRLFWIAQLCGDAQALQEAKVVHEFITSS), 215-249 (DISAYNSIIEMYSGCGSVEDALTVFNSMPERNLET), 250-280 (WCGVIRCFAKNGQGEDAIDTFSRFKQEGNKP), 281-316 (DGEMFKEIFFACGVLGDMNEGLLHFESMYKEYGIIP), and 317-347 (CMEHYVSLVKMLAEPGYLDEALRFVESMEPN). Positions 412-442 (YGIRYMAAGDISRPENRELYMALKSLKEHMI) are type E(+) motif. The interval 443 to 537 (EIGYVPLSKL…DGVCSCREYW (95 aa)) is type DYW motif.

It belongs to the PPR family. PCMP-H subfamily.

It localises to the mitochondrion. The protein is Pentatricopeptide repeat-containing protein At4g32450, mitochondrial (PCMP-H63) of Arabidopsis thaliana (Mouse-ear cress).